The primary structure comprises 1002 residues: MKTTVTKLLATVAAASTIFGMSTLPAFAAEGKSASNGNSVNISDVNATAETRALFDKLKNSGKGDLRFGQQHATDENISSSASQGDVYETTGKYPAVFGWDAGLALRGAEKPGSGADKNANAKALAQNITDADSKGAIVTLSAHWCNPGTGKDFNDTTAVASELLPGGKYSGTFNKELDAIAATAQRAKRSDGTLIPIIFRPLHENNGSWFWWGATHASASEYKELYRYIVDYLRDVKDVHNLLYAYSPGGVFNGDSTDYLATYPGDQWVDVLGYDEYDSDDSADDSSAWINTVVKDMKMVSDQASQRGKIVALTEFGRSGDRKFKESGTGDKDTKFFSELAEALAENVPSTAYMMTWANFGGGGDNFQAYTSWKGSDGEADFKAFADSNKNLMASKDNVDYSNAPAAAMQNGSARIVTPVDGNRVTDTKVVVRVKTEGVKYSDLDLNSAIVTTDRGQNVKLKYSCNGYFTGILDLNAAGINLDQSKLTLTPQVKTKDGKTLAAADGNGSVTVKLGAKPEQTVDNVEDFDSYDNEAELQSVYSPSHSTKSNLTLVDSPEDNGTKAGNIHYDFVSYPEYNGFQRSHTPKQDWSGFSKLNMFLKADGSDHKFVVQVNAGGVTFEAYPKIDGTDGHVVSLNFGDADGNGGDFAPASWDTAHAGMKLSQKLLSKVGSFALYINDNGGNRPKSGDLTLDSIKLDGKRDAYAPNTNPTPGNTAKAQSVDDFSGYSDDAAAQSAWGNRGHTEVLSLDEGPTDGSKALRFKYDFSNGGWYDVAKYLDGANWSGESVLAFQVKGDGSGNAIGLQIGTSDGKYFLASVKLDFTGWKQIEIPLVDNANLTQSWPEDANKDNPMTEDDLASIKELVFASQQWNSESDGLDSSIADIKVEPAENTSNEQTPKDESKTEVKADKEQEQSEDTSADVTAQDPATCPISDEDSKGSTGNTTVTVKPTPDTKEPADNTGKDGLSRTGSNIISAIAAVAVLLLGGCAVLIARKRKGGDIE.

An N-terminal signal peptide occupies residues 1–28 (MKTTVTKLLATVAAASTIFGMSTLPAFA). A GH26 domain is found at 49–396 (AETRALFDKL…ADSNKNLMAS (348 aa)). A substrate-binding site is contributed by histidine 144. Glutamate 205 acts as the Proton donor in catalysis. Substrate contacts are provided by tryptophan 210 and tyrosine 278. Glutamate 316 acts as the Nucleophile in catalysis. Lysine 384 provides a ligand contact to substrate. CBM11 domains follow at residues 523–703 (VDNV…GKRD) and 717–897 (AKAQ…NEQT). 2 disordered regions span residues 702 to 722 (RDAY…AQSV) and 888 to 969 (PAEN…LSRT). The segment covering 707 to 719 (PNTNPTPGNTAKA) has biased composition (polar residues). 2 stretches are compositionally biased toward basic and acidic residues: residues 897 to 913 (TPKD…KEQE) and 952 to 966 (PDTK…KDGL). An LPXTG sorting signal motif is present at residues 966 to 970 (LSRTG). Threonine 969 is subject to Pentaglycyl murein peptidoglycan amidated threonine. Residues 970–1002 (GSNIISAIAAVAVLLLGGCAVLIARKRKGGDIE) constitute a propeptide, removed by sortase.

It belongs to the glycosyl hydrolase 26 family. In terms of assembly, homodimer.

Its subcellular location is the secreted. The protein localises to the cell wall. It catalyses the reaction Random hydrolysis of (1-&gt;4)-beta-D-mannosidic linkages in mannans, galactomannans and glucomannans.. In terms of biological role, beta-mannanase likely involved in the utilization of carbohydrates in the human gut. Catalyzes the hydrolysis of different beta-1,4-linked mannans, such as ivory nut mannan, konjac glucomannan, as well as carob and guar gum galactomannans, to a mixture of oligosaccharides. The dominant product from ivory nut mannan is found to be mannotriose; mannobiose and mannotetraose are produced to a lesser extent. Does not hydrolyze mannobiose, and hydrolyzes mannotriose at a significantly lower rate than the longer oligosaccharides. In Bifidobacterium adolescentis (strain ATCC 15703 / DSM 20083 / NCTC 11814 / E194a), this protein is Mannan endo-1,4-beta-mannosidase.